The chain runs to 389 residues: Probable dual-specificity RNA methyltransferase RlmN (389 aa).

Positions M1–R23 are disordered. E127 (proton acceptor) is an active-site residue. One can recognise a Radical SAM core domain in the interval Y133 to D376. C140 and C381 are oxidised to a cystine. Positions 147, 151, and 154 each coordinate [4Fe-4S] cluster. Residues G202 to E203, S236, S259 to H261, and N338 contribute to the S-adenosyl-L-methionine site. Residue C381 is the S-methylcysteine intermediate of the active site.

Belongs to the radical SAM superfamily. RlmN family. The cofactor is [4Fe-4S] cluster.

It localises to the cytoplasm. It catalyses the reaction adenosine(2503) in 23S rRNA + 2 reduced [2Fe-2S]-[ferredoxin] + 2 S-adenosyl-L-methionine = 2-methyladenosine(2503) in 23S rRNA + 5'-deoxyadenosine + L-methionine + 2 oxidized [2Fe-2S]-[ferredoxin] + S-adenosyl-L-homocysteine. The catalysed reaction is adenosine(37) in tRNA + 2 reduced [2Fe-2S]-[ferredoxin] + 2 S-adenosyl-L-methionine = 2-methyladenosine(37) in tRNA + 5'-deoxyadenosine + L-methionine + 2 oxidized [2Fe-2S]-[ferredoxin] + S-adenosyl-L-homocysteine. Specifically methylates position 2 of adenine 2503 in 23S rRNA and position 2 of adenine 37 in tRNAs. In Bifidobacterium longum (strain NCC 2705), this protein is Probable dual-specificity RNA methyltransferase RlmN.